The sequence spans 595 residues: Solute carrier family 13 member 1 (595 aa).

Transmembrane regions (helical) follow at residues 13–33 (FLFV…LHTK), 41–61 (LFVV…TALL), 77–97 (VASA…CLAT), 108–128 (IALK…LGFM), and 131–151 (TAFL…MPIA). Asparagine 174 and asparagine 207 each carry an N-linked (GlcNAc...) asparagine glycan. The next 8 helical transmembrane spans lie at 239–259 (LTCL…ITGT), 290–310 (PAAL…FLGF), 348–368 (IVTL…DPGF), 381–401 (GFAT…LIPA), 464–484 (PLGS…VTSL), 491–511 (PATI…IHVN), 512–532 (PLYI…LPVA), and 554–574 (GLGV…TWIV). The N-linked (GlcNAc...) asparagine glycan is linked to asparagine 591.

Belongs to the SLC13A/DASS transporter (TC 2.A.47) family. NADC subfamily. In terms of tissue distribution, highly expressed in kidney; not detectable in the other tissues tested.

Its subcellular location is the apical cell membrane. The catalysed reaction is sulfate(out) + 3 Na(+)(out) = sulfate(in) + 3 Na(+)(in). It carries out the reaction selenate(out) + 3 Na(+)(out) = selenate(in) + 3 Na(+)(in). It catalyses the reaction thiosulfate(out) + 3 Na(+)(out) = thiosulfate(in) + 3 Na(+)(in). Inhibited by thiosulfate, selenate, molybdate, tungstate, citrate and succinate. In terms of biological role, sodium:sulfate symporter that mediates sulfate reabsorption in the kidney and small intestine. Can also mediate the transport of selenate and thiosulfate. This chain is Solute carrier family 13 member 1 (SLC13A1), found in Homo sapiens (Human).